A 173-amino-acid chain; its full sequence is HTH-type transcriptional regulator IscR (173 aa).

Residues 2 to 131 enclose the HTH rrf2-type domain; it reads RLTSKGRYAV…NNITLGELMM (130 aa). A DNA-binding region (H-T-H motif) is located at residues 28–51; sequence LADISERQGISLSYLEQLFSKLRK. The [2Fe-2S] cluster site is built by cysteine 92, cysteine 98, and cysteine 104.

[2Fe-2S] cluster serves as cofactor.

Its function is as follows. Regulates the transcription of several operons and genes involved in the biogenesis of Fe-S clusters and Fe-S-containing proteins. The chain is HTH-type transcriptional regulator IscR from Vibrio cholerae serotype O1 (strain ATCC 39315 / El Tor Inaba N16961).